The primary structure comprises 303 residues: Glycine--tRNA ligase alpha subunit (303 aa).

The protein belongs to the class-II aminoacyl-tRNA synthetase family. Tetramer of two alpha and two beta subunits.

Its subcellular location is the cytoplasm. The catalysed reaction is tRNA(Gly) + glycine + ATP = glycyl-tRNA(Gly) + AMP + diphosphate. The chain is Glycine--tRNA ligase alpha subunit from Salmonella paratyphi A (strain ATCC 9150 / SARB42).